Reading from the N-terminus, the 165-residue chain is 6,7-dimethyl-8-ribityllumazine synthase 2 (165 aa).

Residues W24, 56–58, and 80–82 each bind 5-amino-6-(D-ribitylamino)uracil; these read SFE and LVV. Residue R88 is the Proton donor of the active site. Residue S113 coordinates 5-amino-6-(D-ribitylamino)uracil. (2S)-2-hydroxy-3-oxobutyl phosphate is bound at residue H127.

The protein belongs to the DMRL synthase family.

The catalysed reaction is (2S)-2-hydroxy-3-oxobutyl phosphate + 5-amino-6-(D-ribitylamino)uracil = 6,7-dimethyl-8-(1-D-ribityl)lumazine + phosphate + 2 H2O + H(+). The protein operates within cofactor biosynthesis; riboflavin biosynthesis; riboflavin from 2-hydroxy-3-oxobutyl phosphate and 5-amino-6-(D-ribitylamino)uracil: step 1/2. Its function is as follows. Catalyzes the formation of 6,7-dimethyl-8-ribityllumazine by condensation of 5-amino-6-(D-ribitylamino)uracil with 3,4-dihydroxy-2-butanone 4-phosphate. This is the penultimate step in the biosynthesis of riboflavin. This is 6,7-dimethyl-8-ribityllumazine synthase 2 from Bradyrhizobium diazoefficiens (strain JCM 10833 / BCRC 13528 / IAM 13628 / NBRC 14792 / USDA 110).